Reading from the N-terminus, the 604-residue chain is ATP-dependent RNA helicase DBP1 (604 aa).

The segment at 1–79 is disordered; it reads MSDGSGRYVP…RASGSGGFGG (79 aa). Polar residues predominate over residues 32 to 45; that stretch reads SRYSGNGFFSSPNR. The Q motif signature appears at 138 to 166; that stretch reads TEFKSPPLDELLLENVELANFSKPTPVQK. Residues 169 to 358 form the Helicase ATP-binding domain; the sequence is IPIVTKNRDL…RDFLKDYIFL (190 aa). ATP is bound at residue 182-189; it reads AQTGSGKT. A DEAD box motif is present at residues 302–305; it reads DEAD. In terms of domain architecture, Helicase C-terminal spans 386-529; the sequence is LLDILINEID…EVPQFLVNMV (144 aa). The interval 535–591 is disordered; sequence FGRGGRNSRTGSNRGRGSNTRDYRHSNKDDWGSLGSSRRGFRSNDNRGFGNNWGSSS. Low complexity predominate over residues 541 to 552; sequence NSRTGSNRGRGS. Residues 553–565 show a composition bias toward basic and acidic residues; that stretch reads NTRDYRHSNKDDW.

It belongs to the DEAD box helicase family. DDX3/DED1 subfamily.

Its subcellular location is the cytoplasm. The enzyme catalyses ATP + H2O = ADP + phosphate + H(+). Its function is as follows. ATP-binding RNA helicase involved in translation initiation. Remodels RNA in response to ADP and ATP concentrations by facilitating disruption, but also formation of RNA duplexes. Redundant to DED1, may be required in conditions in which DED1 expression is decreased. In Candida glabrata (strain ATCC 2001 / BCRC 20586 / JCM 3761 / NBRC 0622 / NRRL Y-65 / CBS 138) (Yeast), this protein is ATP-dependent RNA helicase DBP1 (DBP1).